The chain runs to 150 residues: Small ribosomal subunit protein eS19 (150 aa).

Belongs to the eukaryotic ribosomal protein eS19 family. Part of the 30S ribosomal subunit.

Its function is as follows. May be involved in maturation of the 30S ribosomal subunit. This chain is Small ribosomal subunit protein eS19, found in Thermoplasma acidophilum (strain ATCC 25905 / DSM 1728 / JCM 9062 / NBRC 15155 / AMRC-C165).